The primary structure comprises 592 residues: Catabolite repression protein creC (592 aa).

A disordered region spans residues 119 to 140 (NSALAAAPVKDPSKKRKPKNNI). 4 WD repeats span residues 248-288 (INSS…ALFI), 327-368 (LANQ…DVFR), 369-408 (SYYG…IIAR), and 411-455 (GHDS…LHRP). Disordered regions lie at residues 459 to 513 (HQTS…HPVE) and 556 to 592 (WDRP…MGSL). 2 stretches are compositionally biased toward polar residues: residues 484-499 (SSGN…TAAD) and 564-576 (SDNY…SETL). One copy of the WD 5 repeat lies at 529–566 (VGEDPICWLGFQEDTIMTSSLEGHIRTWDRPRENISDN).

It belongs to the WD repeat creC family. Interacts with creB.

In terms of biological role, component of the regulatory network controlling carbon source utilization through ubiquitination and deubiquitination involving creA, creB, creC, creD and acrB. Required to prevent the proteolysis of the CreB deubiquitinating enzyme in the absence of carbon catabolite repression. CreB deubiquitinating enzyme stabilized in a complex with the CreC leads to the expression of genes such as those in the proline and quinate pathways. This is Catabolite repression protein creC (creC) from Emericella nidulans (strain FGSC A4 / ATCC 38163 / CBS 112.46 / NRRL 194 / M139) (Aspergillus nidulans).